Here is a 581-residue protein sequence, read N- to C-terminus: Pyridine nucleotide-disulfide oxidoreductase domain-containing protein 2 (581 aa).

Position 38–71 (38–71 (VVIGAGHNGLVAAAYLQRLGVNTAVFERRHVIGG)) interacts with FAD.

The protein belongs to the carotenoid/retinoid oxidoreductase family. As to quaternary structure, interacts with COX5B; this interaction may contribute to localize PYROXD2 to the inner face of the inner mitochondrial membrane.

Its subcellular location is the mitochondrion matrix. Functionally, probable oxidoreductase that may play a role as regulator of mitochondrial function. In Rattus norvegicus (Rat), this protein is Pyridine nucleotide-disulfide oxidoreductase domain-containing protein 2.